A 140-amino-acid polypeptide reads, in one-letter code: UPF0654 protein C22G7.11c (140 aa).

2 disordered regions span residues methionine 1–lysine 88 and tyrosine 110–alanine 140. A compositionally biased stretch (basic and acidic residues) spans alanine 24 to glutamate 33. A compositionally biased stretch (polar residues) spans serine 34–tyrosine 44. A compositionally biased stretch (acidic residues) spans aspartate 54–glutamate 71.

Belongs to the UPF0654 (con-6) family.

This is UPF0654 protein C22G7.11c from Schizosaccharomyces pombe (strain 972 / ATCC 24843) (Fission yeast).